We begin with the raw amino-acid sequence, 131 residues long: Sec-independent protein translocase protein TatB (131 aa).

A helical transmembrane segment spans residues 2–22 (FDGIGFMELLLIGIVGLVVLG). A compositionally biased stretch (polar residues) spans 86 to 95 (LKEAAQSVNR). The segment at 86–131 (LKEAAQSVNRPYQVEDVPAAKDVPAKEMPTSETSTATNANSDKPNG) is disordered. Low complexity predominate over residues 115–131 (TSETSTATNANSDKPNG).

It belongs to the TatB family. The Tat system comprises two distinct complexes: a TatABC complex, containing multiple copies of TatA, TatB and TatC subunits, and a separate TatA complex, containing only TatA subunits. Substrates initially bind to the TatABC complex, which probably triggers association of the separate TatA complex to form the active translocon.

The protein localises to the cell inner membrane. In terms of biological role, part of the twin-arginine translocation (Tat) system that transports large folded proteins containing a characteristic twin-arginine motif in their signal peptide across membranes. Together with TatC, TatB is part of a receptor directly interacting with Tat signal peptides. TatB may form an oligomeric binding site that transiently accommodates folded Tat precursor proteins before their translocation. The protein is Sec-independent protein translocase protein TatB of Shewanella halifaxensis (strain HAW-EB4).